A 710-amino-acid chain; its full sequence is Integrator complex subunit 10 (710 aa).

Positions Ile366–Ser393 are disordered. Residues Leu372–Ser381 show a composition bias toward basic and acidic residues.

Belongs to the Integrator subunit 10 family. In terms of assembly, component of the Integrator complex, composed of core subunits INTS1, INTS2, INTS3, INTS4, INTS5, INTS6, INTS7, INTS8, INTS9/RC74, INTS10, INTS11/CPSF3L, INTS12, INTS13, INTS14 and INTS15. The core complex associates with protein phosphatase 2A subunits PPP2CA and PPP2R1A, to form the Integrator-PP2A (INTAC) complex. INTS10 is part of the tail subcomplex, composed of INTS10, INTS13, INTS14 and INTS15.

The protein resides in the nucleus. Functionally, component of the integrator complex, a multiprotein complex that terminates RNA polymerase II (Pol II) transcription in the promoter-proximal region of genes. The integrator complex provides a quality checkpoint during transcription elongation by driving premature transcription termination of transcripts that are unfavorably configured for transcriptional elongation: the complex terminates transcription by (1) catalyzing dephosphorylation of the C-terminal domain (CTD) of Pol II subunit POLR2A/RPB1 and SUPT5H/SPT5, (2) degrading the exiting nascent RNA transcript via endonuclease activity and (3) promoting the release of Pol II from bound DNA. The integrator complex is also involved in terminating the synthesis of non-coding Pol II transcripts, such as enhancer RNAs (eRNAs), small nuclear RNAs (snRNAs), telomerase RNAs and long non-coding RNAs (lncRNAs). The protein is Integrator complex subunit 10 (INTS10) of Gallus gallus (Chicken).